Reading from the N-terminus, the 203-residue chain is Putative 3-methyladenine DNA glycosylase (203 aa).

Belongs to the DNA glycosylase MPG family.

In Desulfitobacterium hafniense (strain Y51), this protein is Putative 3-methyladenine DNA glycosylase.